The chain runs to 810 residues: Calpain-3 (810 aa).

A compositionally biased stretch (low complexity) spans 9 to 27 (VAQQTAAGSVPSTTSTTTE). The tract at residues 9–31 (VAQQTAAGSVPSTTSTTTEGTGG) is disordered. The Calpain catalytic domain occupies 68–410 (LYEDPDFPPN…FTKLEICNLT (343 aa)). Active-site residues include cysteine 123, histidine 327, and asparagine 351. The segment at 411–579 (PDTLEADKLQ…KRSLSEEVEN (169 aa)) is domain III. The interval 578–639 (ENMIEADRPS…SAKAREKSEE (62 aa)) is disordered. The tract at residues 580–638 (MIEADRPSKKKKGKPIIFVSDRANSNKELTTDEDAGKDGEKTHVDEKKRSSAKAREKSE) is linker. Basic and acidic residues predominate over residues 613-639 (DAGKDGEKTHVDEKKRSSAKAREKSEE). EF-hand domains follow at residues 638–672 (EEET…VVKK), 681–714 (FELE…DKIK), 711–746 (DKIK…AGFR), and 776–810 (VRLD…TMYA). The interval 639-809 (EETQFRNIFR…VLEWLQLTMY (171 aa)) is domain IV. Residues alanine 651, aspartate 654, glutamate 656, glutamate 661, aspartate 694, aspartate 696, serine 698, lysine 700, glutamate 705, aspartate 724, aspartate 726, serine 728, threonine 730, glutamate 735, aspartate 789, aspartate 791, aspartate 793, and isoleucine 795 each coordinate Ca(2+).

Belongs to the peptidase C2 family. As to quaternary structure, homodimer; via EF-hand domain 4. Interacts with TTN/titin. Interacts with CMYA5; this interaction, which results in CMYA5 proteolysis, may protect CAPN3 from autolysis. Interacts with SIMC1. Interacts with UTP25; the interaction is required for CAPN3 translocation to the nucleolus. Skeletal muscle. Low levels in spleen, intestine and bone.

It localises to the cytoplasm. It is found in the nucleus. The protein resides in the nucleolus. The catalysed reaction is Broad endopeptidase activity.. Its activity is regulated as follows. Activated by micromolar concentrations of calcium and inhibited by calpastatin. Its function is as follows. Calcium-regulated non-lysosomal thiol-protease. Proteolytically cleaves CTBP1. Mediates, with UTP25, the proteasome-independent degradation of p53/TP53. This chain is Calpain-3 (CAPN3), found in Gallus gallus (Chicken).